Reading from the N-terminus, the 101-residue chain is NADH-quinone oxidoreductase subunit K (101 aa).

Helical transmembrane passes span 4–24 (LGHL…GIFL), 30–50 (IVLL…FIAF), and 62–82 (FVFF…AILV).

Belongs to the complex I subunit 4L family. NDH-1 is composed of 14 different subunits. Subunits NuoA, H, J, K, L, M, N constitute the membrane sector of the complex.

The protein resides in the cell inner membrane. It catalyses the reaction a quinone + NADH + 5 H(+)(in) = a quinol + NAD(+) + 4 H(+)(out). Functionally, NDH-1 shuttles electrons from NADH, via FMN and iron-sulfur (Fe-S) centers, to quinones in the respiratory chain. The immediate electron acceptor for the enzyme in this species is believed to be ubiquinone. Couples the redox reaction to proton translocation (for every two electrons transferred, four hydrogen ions are translocated across the cytoplasmic membrane), and thus conserves the redox energy in a proton gradient. In Xylella fastidiosa (strain Temecula1 / ATCC 700964), this protein is NADH-quinone oxidoreductase subunit K.